We begin with the raw amino-acid sequence, 618 residues long: Nuclear RNA export factor 1 (618 aa).

Residues 1 to 15 are compositionally biased toward basic and acidic residues; that stretch reads MADEGKSYNEHDDRV. A disordered region spans residues 1–113; that stretch reads MADEGKSYNE…RGGAGTSQDG (113 aa). At A2 the chain carries N-acetylalanine. The minor non-specific RNA-binding stretch occupies residues 2–59; that stretch reads ADEGKSYNEHDDRVSFPQRRKKGRGPFRWKCGEGNRRSGRGGSGVQSSRFEEDDGDVA. The tract at residues 2 to 117 is RNA-binding (RBD); sequence ADEGKSYNEH…GTSQDGTTKN (116 aa). Positions 2 to 197 are interaction with ALYREF/THOC4 and LUZP4; the sequence is ADEGKSYNEH…IIINASAPPY (196 aa). A compositionally biased stretch (basic residues) spans 19–28; sequence QRRKKGRGPF. An Asymmetric dimethylarginine; alternate modification is found at R41. R41 bears the Omega-N-methylarginine; alternate mark. Residues 60–117 are major non-specific RNA-binding; it reads MNDPQDGPRVRYNPYTNRPNRRGDGWHDRDRIHITVRRDRAPAERGGAGTSQDGTTKN. The interval 60–117 is RNA binding; sequence MNDPQDGPRVRYNPYTNRPNRRGDGWHDRDRIHITVRRDRAPAERGGAGTSQDGTTKN. A Nuclear localization signal motif is present at residues 66-99; the sequence is GPRVRYNPYTNRPNRRGDGWHDRDRIHITVRRDR. Residues 80–102 show a composition bias toward basic and acidic residues; the sequence is RRGDGWHDRDRIHITVRRDRAPA. The Nuclear export signal motif lies at 82-109; the sequence is GDGWHDRDRIHITVRRDRAPAERGGAGT. Positions 118-197 constitute an RRM domain; the sequence is WFKITIPYGR…IIINASAPPY (80 aa). Y125 carries the post-translational modification 3'-nitrotyrosine. LRR repeat units follow at residues 265–290, 291–314, 315–342, and 343–370; these read ELLS…QKAP, NLKT…IKGL, KLEE…AIRE, and RFPK…TMLP. In terms of domain architecture, NTF2 spans 385–535; it reads LVLRFLQQYY…LCIVNDELFV (151 aa). A TAP-C domain is found at 564 to 618; the sequence is PEQQEMLQAFSTQSGMNLEWSQKCLQDNNWDYTRSAQAFTLLKAKGEIPEVAFMK.

The protein belongs to the NXF family. In terms of assembly, heterodimer (via NTF2 domain) with NXT1. The formation of NXF1-NXT1 heterodimers is required for the NXF1-mediated nuclear mRNA export. Forms a complex with RANBP2/NUP358, NXT1 and RANGAP1. Associates with the exon junction complex (EJC). Associates with the transcription/export (TREX) complex. Found in a mRNA complex with UPF3A and UPF3B. Found in a post-splicing complex with RBM8A, UPF1, UPF2, UPF3A, UPF3B and RNPS1. Interacts (via N-terminus) with DHX9 (via N-terminus); this interaction is direct and negatively regulates NXF1-mediated nuclear export of constitutive transport element (CTE)-containing cellular mRNAs. Interacts with FYTTD1/UIF. Interacts with EIF4A3. Interacts with NUP42. Interacts with ALYREF/THOC4. Interacts with CHTOP. Interacts with FRG1 (via N-terminus). Interacts with LUZP4. Interacts with FMR1; the interaction occurs in a mRNA-dependent and polyribosomes-independent manner in the nucleus. Interacts with CPSF6 (via N-terminus); this interaction is direct. Interacts with RBM15. Interacts with RBM15B. Interacts with MCM3AP; this interaction is not mediated by RNA. Interacts with DDX3X (via C-terminus); this interaction may be partly involved in DDX3X nuclear export and in NXF1 localization to stress granules. Interacts with PABPC1/PABP1. As to expression, expressed ubiquitously.

The protein resides in the nucleus. It localises to the nucleoplasm. Its subcellular location is the nucleus speckle. The protein localises to the cytoplasm. It is found in the nuclear pore complex. The protein resides in the nucleus envelope. It localises to the stress granule. Its function is as follows. Involved in the nuclear export of mRNA species bearing retroviral constitutive transport elements (CTE) and in the export of mRNA from the nucleus to the cytoplasm (TAP/NFX1 pathway). The NXF1-NXT1 heterodimer is involved in the export of HSP70 mRNA in conjunction with ALYREF/THOC4 and THOC5 components of the TREX complex. ALYREF/THOC4-bound mRNA is thought to be transferred to the NXF1-NXT1 heterodimer for export. Also involved in nuclear export of m6A-containing mRNAs: interaction between SRSF3 and YTHDC1 facilitates m6A-containing mRNA-binding to both SRSF3 and NXF1, promoting mRNA nuclear export. The protein is Nuclear RNA export factor 1 (Nxf1) of Mus musculus (Mouse).